We begin with the raw amino-acid sequence, 24 residues long: Humanin-like 10 (24 aa).

The protein belongs to the humanin family. As to expression, expressed in mature brain, thyroid gland and testis.

It is found in the secreted. The protein resides in the cytoplasm. Plays a role as a neuroprotective and antiapoptotic factor. This Homo sapiens (Human) protein is Humanin-like 10.